Consider the following 504-residue polypeptide: Zinc finger CCCH domain-containing protein 18 (504 aa).

Residues 40-69 are a coiled coil; the sequence is SNADLLEVHEELLAAIKDAEEGLLHLKRSR. Positions 77-105 are disordered; it reads IFPNQEPTSEAPEVAVDPPDDVEPEPLEP. Acidic residues predominate over residues 94–104; the sequence is PPDDVEPEPLE. The C3H1-type zinc finger occupies 146-173; sequence SENMSMCKFFLQQRCRFGSNCRLSHGIV. The tract at residues 230–276 is disordered; that stretch reads GSSARLPSDSLSISEYADESDEDGEGSSSDEGSDFSEDGDQEDESVH. 2 stretches are compositionally biased toward acidic residues: residues 245 to 254 and 260 to 272; these read YADESDEDGE and EGSD…DQED. Residues 304–350 enclose the G-patch domain; it reads TRGVASKMMAKMGYREGMGLGVSGQGMLDPIPVKVLPPKQSLDHAVA. 3 disordered regions span residues 351–390, 406–432, and 482–504; these read ASEV…EEER, AEGS…DRRS, and EATH…WLKF. Over residues 361–374 the composition is skewed to basic residues; that stretch reads GKKRSRGGKRKREK. Basic and acidic residues-rich tracts occupy residues 375 to 390, 413 to 432, and 493 to 504; these read KFAE…EEER, SKKD…DRRS, and ARKEKEKKWLKF. Residues 430 to 500 are a coiled coil; the sequence is RRSLLAYDDE…AVARKEKEKK (71 aa).

The sequence is that of Zinc finger CCCH domain-containing protein 18 from Oryza sativa subsp. japonica (Rice).